A 400-amino-acid polypeptide reads, in one-letter code: Nicotinate phosphoribosyltransferase (400 aa).

His220 is subject to Phosphohistidine; by autocatalysis.

It belongs to the NAPRTase family. In terms of processing, transiently phosphorylated on a His residue during the reaction cycle. Phosphorylation strongly increases the affinity for substrates and increases the rate of nicotinate D-ribonucleotide production. Dephosphorylation regenerates the low-affinity form of the enzyme, leading to product release.

The catalysed reaction is nicotinate + 5-phospho-alpha-D-ribose 1-diphosphate + ATP + H2O = nicotinate beta-D-ribonucleotide + ADP + phosphate + diphosphate. Its pathway is cofactor biosynthesis; NAD(+) biosynthesis; nicotinate D-ribonucleotide from nicotinate: step 1/1. Functionally, catalyzes the synthesis of beta-nicotinate D-ribonucleotide from nicotinate and 5-phospho-D-ribose 1-phosphate at the expense of ATP. In Shigella boydii serotype 18 (strain CDC 3083-94 / BS512), this protein is Nicotinate phosphoribosyltransferase.